The following is a 419-amino-acid chain: Phosphoglycerate kinase (419 aa).

Substrate-binding positions include Asp-42–Asn-44, Arg-58, His-81–Arg-84, Arg-135, and Arg-168. ATP contacts are provided by residues Lys-219, Glu-341, and Gly-367–Thr-370.

This sequence belongs to the phosphoglycerate kinase family. Monomer.

The protein resides in the cytoplasm. The catalysed reaction is (2R)-3-phosphoglycerate + ATP = (2R)-3-phospho-glyceroyl phosphate + ADP. Its pathway is carbohydrate degradation; glycolysis; pyruvate from D-glyceraldehyde 3-phosphate: step 2/5. This Ralstonia nicotianae (strain ATCC BAA-1114 / GMI1000) (Ralstonia solanacearum) protein is Phosphoglycerate kinase.